Consider the following 262-residue polypeptide: DNA repair protein RecO (262 aa).

This sequence belongs to the RecO family.

Its function is as follows. Involved in DNA repair and RecF pathway recombination. The polypeptide is DNA repair protein RecO (Acidovorax ebreus (strain TPSY) (Diaphorobacter sp. (strain TPSY))).